The chain runs to 351 residues: uncharacterized protein (351 aa).

Positions 215, 226, 290, 319, and 333 each coordinate Mn(2+).

It belongs to the peptidase M24B family. The cofactor is Mn(2+).

This is an uncharacterized protein from Staphylococcus haemolyticus (strain JCSC1435).